Consider the following 171-residue polypeptide: Cadmium-induced protein AS8 (171 aa).

This Arabidopsis thaliana (Mouse-ear cress) protein is Cadmium-induced protein AS8.